The primary structure comprises 513 residues: Activin receptor type-2A (513 aa).

The first 19 residues, 1 to 19, serve as a signal peptide directing secretion; it reads MGAAAKLAFAVFLISCSSG. The Extracellular segment spans residues 20 to 135; that stretch reads AILGRSETQE…TSNPVTPKPP (116 aa). 5 disulfides stabilise this stretch: Cys30/Cys60, Cys50/Cys78, Cys85/Cys104, Cys91/Cys103, and Cys105/Cys110. 2 N-linked (GlcNAc...) asparagine glycosylation sites follow: Asn43 and Asn66. The helical transmembrane segment at 136 to 161 threads the bilayer; the sequence is YYNILLYSLVPLMLVAGIVICAFWVY. Residues 162–513 are Cytoplasmic-facing; it reads RHHKMAYPPV…VDFPPKESSL (352 aa). The Protein kinase domain occupies 192–485; it reads LQLLEVKARG…GERITQMQRL (294 aa). ATP-binding positions include 198–206 and Lys219; that span reads KARGGFGCV. The Proton acceptor role is filled by Asp322.

The protein belongs to the protein kinase superfamily. TKL Ser/Thr protein kinase family. TGFB receptor subfamily. Part of a complex consisting of MAGI2/ARIP1, ACVR2A, ACVR1B and SMAD3. Interacts with MAGI2/ARIP1. Interacts with type I receptor ACVR1. Interacts with TSC22D1/TSC-22. Interacts with activin A/INHBA. It depends on Mg(2+) as a cofactor. Requires Mn(2+) as cofactor.

It is found in the cell membrane. It carries out the reaction L-threonyl-[receptor-protein] + ATP = O-phospho-L-threonyl-[receptor-protein] + ADP + H(+). The enzyme catalyses L-seryl-[receptor-protein] + ATP = O-phospho-L-seryl-[receptor-protein] + ADP + H(+). In terms of biological role, on ligand binding, forms a receptor complex consisting of two type II and two type I transmembrane serine/threonine kinases. Type II receptors phosphorylate and activate type I receptors which autophosphorylate, then bind and activate SMAD transcriptional regulators. Receptor for activin A, activin B and inhibin A. Mediates induction of adipogenesis by GDF6. The polypeptide is Activin receptor type-2A (ACVR2A) (Ovis aries (Sheep)).